Reading from the N-terminus, the 181-residue chain is Protein Syd (181 aa).

Belongs to the Syd family.

It localises to the cell inner membrane. Functionally, interacts with the SecY protein in vivo. May bind preferentially to an uncomplexed state of SecY, thus functioning either as a chelating agent for excess SecY in the cell or as a regulatory factor that negatively controls the translocase function. The protein is Protein Syd of Escherichia coli O17:K52:H18 (strain UMN026 / ExPEC).